Reading from the N-terminus, the 102-residue chain is Glutaredoxin (102 aa).

The Glutaredoxin domain maps to 3–102; it reads MTKTKELVSS…VPLLTEAGAV (100 aa). Residues Cys-23 and Cys-26 are joined by a disulfide bond.

This sequence belongs to the glutaredoxin family. CPYC subfamily.

The protein resides in the cytoplasm. Functionally, has a glutathione-disulfide oxidoreductase activity in the presence of NADPH and glutathione reductase. Reduces low molecular weight disulfides and proteins. This chain is Glutaredoxin, found in Ricinus communis (Castor bean).